The chain runs to 429 residues: 3-phosphoshikimate 1-carboxyvinyltransferase (429 aa).

The 3-phosphoshikimate site is built by Lys-11, Ser-12, and Arg-16. Lys-11 contacts phosphoenolpyruvate. Phosphoenolpyruvate-binding residues include Gly-82 and Arg-110. Positions 155, 157, 302, and 329 each coordinate 3-phosphoshikimate. A phosphoenolpyruvate-binding site is contributed by Gln-157. Catalysis depends on Asp-302, which acts as the Proton acceptor. Residues Arg-333 and Arg-385 each coordinate phosphoenolpyruvate.

It belongs to the EPSP synthase family. In terms of assembly, monomer.

It localises to the cytoplasm. It carries out the reaction 3-phosphoshikimate + phosphoenolpyruvate = 5-O-(1-carboxyvinyl)-3-phosphoshikimate + phosphate. It participates in metabolic intermediate biosynthesis; chorismate biosynthesis; chorismate from D-erythrose 4-phosphate and phosphoenolpyruvate: step 6/7. In terms of biological role, catalyzes the transfer of the enolpyruvyl moiety of phosphoenolpyruvate (PEP) to the 5-hydroxyl of shikimate-3-phosphate (S3P) to produce enolpyruvyl shikimate-3-phosphate and inorganic phosphate. This Helicobacter pylori (strain J99 / ATCC 700824) (Campylobacter pylori J99) protein is 3-phosphoshikimate 1-carboxyvinyltransferase.